The sequence spans 193 residues: Peptide deformylase 2 (193 aa).

Cysteine 100 and histidine 142 together coordinate Fe cation. Residue glutamate 143 is part of the active site. Residue histidine 146 coordinates Fe cation.

Belongs to the polypeptide deformylase family. It depends on Fe(2+) as a cofactor.

The catalysed reaction is N-terminal N-formyl-L-methionyl-[peptide] + H2O = N-terminal L-methionyl-[peptide] + formate. In terms of biological role, removes the formyl group from the N-terminal Met of newly synthesized proteins. Requires at least a dipeptide for an efficient rate of reaction. N-terminal L-methionine is a prerequisite for activity but the enzyme has broad specificity at other positions. This is Peptide deformylase 2 from Corynebacterium efficiens (strain DSM 44549 / YS-314 / AJ 12310 / JCM 11189 / NBRC 100395).